Here is a 357-residue protein sequence, read N- to C-terminus: Endo-1,4-beta-xylanase Xyn11B (357 aa).

The signal sequence occupies residues 1–27 (MKIFQNTKNVIVSIAWAAALCTSAVSA). Residues 29–226 (TLTSNSTGTN…SRGSSDITVS (198 aa)) form the GH11 domain. Glu116 serves as the catalytic Nucleophile. Glu213 acts as the Proton donor in catalysis. The segment at 220 to 245 (SSDITVSQGGSSGGGNSSSSSSASGG) is disordered.

The protein belongs to the glycosyl hydrolase 11 (cellulase G) family.

The protein localises to the secreted. The enzyme catalyses Endohydrolysis of (1-&gt;4)-beta-D-xylosidic linkages in xylans.. It participates in glycan degradation; xylan degradation. Its function is as follows. Endo-acting xylanase which specifically cleaves internal linkages on the xylan backbone, releasing xylooligosaccharides. Is able to hydrolyze glucuronoxylan and the arabinoxylan from wheat. The polypeptide is Endo-1,4-beta-xylanase Xyn11B (xyn11B) (Cellvibrio japonicus (Pseudomonas fluorescens subsp. cellulosa)).